Reading from the N-terminus, the 161-residue chain is RNA pyrophosphohydrolase (161 aa).

A Nudix hydrolase domain is found at 7–149 (KYRPCVGIML…KKEVYKTVIE (143 aa)). The short motif at 40–61 (GGIDDGEKLEQAALRELLEEVG) is the Nudix box element.

It belongs to the Nudix hydrolase family. RppH subfamily. Requires a divalent metal cation as cofactor.

In terms of biological role, accelerates the degradation of transcripts by removing pyrophosphate from the 5'-end of triphosphorylated RNA, leading to a more labile monophosphorylated state that can stimulate subsequent ribonuclease cleavage. The protein is RNA pyrophosphohydrolase of Wolbachia sp. subsp. Brugia malayi (strain TRS).